Reading from the N-terminus, the 203-residue chain is Small ribosomal subunit protein uS3 (203 aa).

Residues 39–113 (IREIIRRNFL…NHVLNAKNIA (75 aa)) enclose the KH type-2 domain.

Belongs to the universal ribosomal protein uS3 family. As to quaternary structure, part of the 30S ribosomal subunit. Forms a tight complex with proteins S10 and S14.

Functionally, binds the lower part of the 30S subunit head. Binds mRNA in the 70S ribosome, positioning it for translation. This chain is Small ribosomal subunit protein uS3, found in Carsonella ruddii.